The sequence spans 226 residues: Sugar fermentation stimulation protein homolog (226 aa).

It belongs to the SfsA family.

The polypeptide is Sugar fermentation stimulation protein homolog (Clostridium beijerinckii (strain ATCC 51743 / NCIMB 8052) (Clostridium acetobutylicum)).